Here is a 173-residue protein sequence, read N- to C-terminus: Shikimate kinase (173 aa).

10 to 15 (GSGKTT) serves as a coordination point for ATP. Thr14 provides a ligand contact to Mg(2+). Residues Asp32, Arg56, and Gly78 each contribute to the substrate site. Position 117 (Arg117) interacts with ATP. Arg135 is a binding site for substrate.

The protein belongs to the shikimate kinase family. As to quaternary structure, monomer. Mg(2+) serves as cofactor.

The protein localises to the cytoplasm. The catalysed reaction is shikimate + ATP = 3-phosphoshikimate + ADP + H(+). Its pathway is metabolic intermediate biosynthesis; chorismate biosynthesis; chorismate from D-erythrose 4-phosphate and phosphoenolpyruvate: step 5/7. In terms of biological role, catalyzes the specific phosphorylation of the 3-hydroxyl group of shikimic acid using ATP as a cosubstrate. The sequence is that of Shikimate kinase from Limosilactobacillus fermentum (strain NBRC 3956 / LMG 18251) (Lactobacillus fermentum).